The following is a 214-amino-acid chain: uncharacterized protein (214 aa).

Transmembrane regions (helical) follow at residues 19-39 (IAIF…SYIL) and 50-70 (LALF…LLIG).

It localises to the cell membrane. This is an uncharacterized protein from Methanocaldococcus jannaschii (strain ATCC 43067 / DSM 2661 / JAL-1 / JCM 10045 / NBRC 100440) (Methanococcus jannaschii).